Reading from the N-terminus, the 181-residue chain is CDP-diacylglycerol--glycerol-3-phosphate 3-phosphatidyltransferase (181 aa).

Transmembrane regions (helical) follow at residues 8–28, 35–55, 64–84, and 148–168; these read PNYLTIARIMVIPVIILAFYI, KLGALLFVLASITDFFDGYIA, FGKMFDPIADKLLIGCVIIML, and IIYLDIVGEIILWIAAFLTII.

The protein belongs to the CDP-alcohol phosphatidyltransferase class-I family.

The protein resides in the cell membrane. It carries out the reaction a CDP-1,2-diacyl-sn-glycerol + sn-glycerol 3-phosphate = a 1,2-diacyl-sn-glycero-3-phospho-(1'-sn-glycero-3'-phosphate) + CMP + H(+). The protein operates within phospholipid metabolism; phosphatidylglycerol biosynthesis; phosphatidylglycerol from CDP-diacylglycerol: step 1/2. Functionally, this protein catalyzes the committed step to the synthesis of the acidic phospholipids. The chain is CDP-diacylglycerol--glycerol-3-phosphate 3-phosphatidyltransferase (pgsA) from Rickettsia felis (strain ATCC VR-1525 / URRWXCal2) (Rickettsia azadi).